Reading from the N-terminus, the 120-residue chain is Large ribosomal subunit protein bL19 (120 aa).

Belongs to the bacterial ribosomal protein bL19 family.

In terms of biological role, this protein is located at the 30S-50S ribosomal subunit interface and may play a role in the structure and function of the aminoacyl-tRNA binding site. The chain is Large ribosomal subunit protein bL19 from Kocuria rhizophila (strain ATCC 9341 / DSM 348 / NBRC 103217 / DC2201).